Consider the following 404-residue polypeptide: p-hydroxybenzoate hydroxylase (404 aa).

FAD is bound by residues glutamate 35, 45–50 (RIRAGI), and glutamine 105. Substrate-binding positions include tyrosine 203, 214–216 (SMR), and tyrosine 224. Aspartate 288 provides a ligand contact to FAD. Proline 295 provides a ligand contact to substrate. 301–302 (LN) is an FAD binding site.

Belongs to the aromatic-ring hydroxylase family. In terms of assembly, homodimer. FAD serves as cofactor.

The catalysed reaction is 4-hydroxybenzoate + NADPH + O2 + H(+) = 3,4-dihydroxybenzoate + NADP(+) + H2O. The protein operates within aromatic compound metabolism; benzoate degradation via hydroxylation; 3,4-dihydroxybenzoate from benzoate: step 2/2. Its function is as follows. Catalyzes the incorporation of an atom of dioxygen into p-hydroxybenzoate (p-OHB) to form 3,4-dihydroxybenzoate (3,4DOHB). The reaction occurs in two parts: reduction of the flavin adenine dinucleotide (FAD) in the enzyme by reduced nicotinamide adenine dinucleotide phosphate (NADPH) in response to binding p-hydroxybenzoate to the enzyme and oxidation of reduced FAD with oxygen to form a hydroperoxide, which then oxygenates p-hydroxybenzoate. In Acinetobacter baylyi (strain ATCC 33305 / BD413 / ADP1), this protein is p-hydroxybenzoate hydroxylase (pobA).